We begin with the raw amino-acid sequence, 113 residues long: Immunoglobulin lambda variable 2-23 (113 aa).

Positions 1-19 are cleaved as a signal peptide; the sequence is MAWALLLLTLLTQDTGSWA. Glutamine 20 carries the post-translational modification Pyrrolidone carboxylic acid. Residues 20–44 form a framework-1 region; that stretch reads QSALTQPASVSGSPGQSITISCTGT. Positions 20-113 constitute an Ig-like domain; that stretch reads QSALTQPASV…EADYYCCSYA (94 aa). Cysteine 41 and cysteine 109 form a disulfide bridge. A complementarity-determining-1 region spans residues 45-53; the sequence is SSDVGSYNL. The interval 54–70 is framework-2; the sequence is VSWYQQHPGKAPKLMIY. A complementarity-determining-2 region spans residues 71–73; the sequence is EGS. Positions 73-92 are disordered; sequence SKRPSGVSNRFSGSKSGNTA. The segment at 74–109 is framework-3; the sequence is KRPSGVSNRFSGSKSGNTASLTISGLQAEDEADYYC. Residues 78-92 are compositionally biased toward polar residues; that stretch reads GVSNRFSGSKSGNTA. Positions 110–113 are complementarity-determining-3; that stretch reads CSYA.

Immunoglobulins are composed of two identical heavy chains and two identical light chains; disulfide-linked.

The protein localises to the secreted. Its subcellular location is the cell membrane. Functionally, v region of the variable domain of immunoglobulin light chains that participates in the antigen recognition. Immunoglobulins, also known as antibodies, are membrane-bound or secreted glycoproteins produced by B lymphocytes. In the recognition phase of humoral immunity, the membrane-bound immunoglobulins serve as receptors which, upon binding of a specific antigen, trigger the clonal expansion and differentiation of B lymphocytes into immunoglobulins-secreting plasma cells. Secreted immunoglobulins mediate the effector phase of humoral immunity, which results in the elimination of bound antigens. The antigen binding site is formed by the variable domain of one heavy chain, together with that of its associated light chain. Thus, each immunoglobulin has two antigen binding sites with remarkable affinity for a particular antigen. The variable domains are assembled by a process called V-(D)-J rearrangement and can then be subjected to somatic hypermutations which, after exposure to antigen and selection, allow affinity maturation for a particular antigen. The polypeptide is Immunoglobulin lambda variable 2-23 (Homo sapiens (Human)).